A 97-amino-acid chain; its full sequence is Ig heavy chain V region 914 (97 aa).

The Ig-like domain occupies 1–97; the sequence is EVKLVESGGG…EDTAMYYCAR (97 aa).

The protein is Ig heavy chain V region 914 of Mus musculus (Mouse).